Here is a 128-residue protein sequence, read N- to C-terminus: Holo-[acyl-carrier-protein] synthase (128 aa).

Positions 8 and 59 each coordinate Mg(2+).

This sequence belongs to the P-Pant transferase superfamily. AcpS family. The cofactor is Mg(2+).

The protein localises to the cytoplasm. It carries out the reaction apo-[ACP] + CoA = holo-[ACP] + adenosine 3',5'-bisphosphate + H(+). Transfers the 4'-phosphopantetheine moiety from coenzyme A to a Ser of acyl-carrier-protein. This is Holo-[acyl-carrier-protein] synthase from Rickettsia typhi (strain ATCC VR-144 / Wilmington).